Reading from the N-terminus, the 223-residue chain is Protein-lysine N-methyltransferase CG9154 (223 aa).

This sequence belongs to the class I-like SAM-binding methyltransferase superfamily. EFM5 family.

It is found in the cytoplasm. S-adenosyl-L-methionine-dependent protein-lysine N-methyltransferase that methylates elongation factor 1-alpha. This chain is Protein-lysine N-methyltransferase CG9154, found in Drosophila melanogaster (Fruit fly).